A 311-amino-acid chain; its full sequence is Mitochondrial ribosome-associated GTPase 1 (311 aa).

Residues 27 to 200 (AKGLKQMKTK…LFDTPGVLSP (174 aa)) enclose the CP-type G domain. GTP-binding positions include 74-77 (NKMD), 144-149 (NVGKSS), and G196.

Belongs to the TRAFAC class YlqF/YawG GTPase family. MTG1 subfamily.

It is found in the mitochondrion inner membrane. Its function is as follows. Plays a role in the regulation of the mitochondrial ribosome assembly and of translational activity. Displays mitochondrial GTPase activity. The chain is Mitochondrial ribosome-associated GTPase 1 from Xenopus tropicalis (Western clawed frog).